We begin with the raw amino-acid sequence, 241 residues long: DNA-binding dual master transcriptional regulator RpaA (241 aa).

Positions 3 to 119 constitute a Response regulatory domain; sequence RILIIDDDPA…EMLARVRALL (117 aa). Asp52 carries the 4-aspartylphosphate modification. Residues 132-231 constitute a DNA-binding region (ompR/PhoB-type); it reads SEILNQGPLT…VYGAGYCLEL (100 aa).

Interacts with reduced ferredoxin (petF). Interacts with CikA, RpaB, SasA, Sll0038 (pixG) and a number of other proteins. Phosphorylated by SasA; phosphorylation is maximal when KaiC phosphorylation is active during the circadian cycle. Dephosphorylated by CikA. CikA and SasA cooperation generates RpaA activity oscillation that is distinct from that generated by CikA or SasA alone and offset from the rhythm of KaiC phosphorylation.

The protein resides in the cytoplasm. Response regulator of 2 two-component regulatory systems SasA/RpaA and CikA/RpaA involved in genome-wide circadian gene expression. The histidine kinases have opposing effects modulated by the clock oscillator proteins; SasA phosphorylates RpaA (stimulated by fully phosphorylated KaiC1) while CikA dephosphorylates phospho-RpaA (stimulated by the phospho-Ser-432-KaiC1-KaiB complex). Its function is as follows. The RpaA regulon is about 300 genes, and includes itself, cikA, sigE, sigG, genes involved in photosynthesis, carbon metabolism in the light and dark, phototaxis, CRISPR arrays 2 and 3 as well as nearly 90 ncRNAs. Genes are up- or down-regulated in its absence. Involved in regulation of primary sugar and amino acid metabolism and in adaptation to light changes. Regulates the accumulation of the monomeric photosystem I and the D1 protein under high light conditions. Overexpression causes cells to grow more slowly, increases levels of transcripts for clock oscillator genes in the light and the dark, increases levels of SigE protein, increases accumulation of sugar catabolic enzymes in the dark with concomitant decreases in most sugar metabolites. Plays a role in cell division; overexpression from the psbAII promoter increases expression of some cell-division-related genes, alters cell volume and changes the outer cell membrane and cell wall appearance. The protein is DNA-binding dual master transcriptional regulator RpaA of Synechocystis sp. (strain ATCC 27184 / PCC 6803 / Kazusa).